The following is a 2090-amino-acid chain: MKSHTSAAKVVFLVGDQVDSWHNGLQHVIKAAGATPWLQSYLDDLSNAIKAEIAEAALDNALHASLGTFSSLLELGERYRHRSDDLGMAQCLLLHAVRSSLFLQMAKQSAHILSPESQTEWLGISGGLISLSPRFVAEDFETLREASIEIGRLFVRLCKLVSVRSRAIEDNTGVWGWAILGVSKDEIRKGLDKFQQNMRIPAIKRAQVGVTGPGWSTIIGPPSVLDLCIKQCPAIATATKNPLNIHALQHTLAITQTDLNYIVGNSQLMSRALHHIRPRLWGMDDPEATYQNWGDMLRAICSQVLSLSLDIPEAVANLGASLRGCDSVQIIQMDNTSHGPFVSTALKAPGRKATLLETHSYLQTQFQGTEPPQKTGRIAIVGMSGRGPRSDNIDEFWDVIMQKQDTCTEVPKDRFDIDEFYCEEHGKGNKICTMTTKYGCFMDKPGHFDARFFHISPRESMLMDPGHRHFLMSSYEALEMAGYSDGPTKLTDPNRIAAFYGQVTDDWHDQSHPTLGCDAYTLQGVQRAFSSGRLAWQFKWEGPTYSLDSACASTTAAIHLACMSLLSNDIDMAVAGASNILNYPHSFACLSKSGVLSDTGNCKPYRDDADGYCRADFVGSVVLKRLEDAVADNDNILAVIASSGRNHSGNSTSITSSDPGAQERLFRKVLRNANVSPDDISYVEMHGTGTPVGDPAEMSAVGNVFKHRRRADGPLPVGAVKANFGHSEGAAGMASLLKCIMMFKTDTIPPQAGMPHALNPNFPPLSELNVEIPAEPKEFKKTRSGEPRRILLNNFDAAGGNACLLLEDWDGSHSPVAQLEDTTDTRSSHVVTLSSRTQAAHKANKQNFLNWLRENTTARLADIAYTTAARRMHHPIRSAYTASTTEELMARVEASIQVSESSSLTSQQTPIIFVFSGQGSHYAGMGSDLYQTSPSFRETVDLCGHIGKIHGFPPFIDLIADKAIDMSTKSTVQTQLAVLTLEIGLAAFWKAAGVQPSAVMGHSLGEYAALHVSGVLSLADVLYLVGQRASLLLERCEENGFAMLAVAMSAKETQELLDSNKEFPSCSIACFNGPNATVISGEAHDISQLQGRVSKASKVLPVPYGFHSFQMDSIISEYSTLADGVTFSEPKIPVASTLVGSMIETKDIINSVYLAQQTRQPVDFIGGLNAIQQMFNDPIWLEIGPNQVCTQFVRASSSSSSPNTKTLSTLEGQSRDWVAINKCMAMLYTQGIAIDWLALHKPFMNSLRMVTLPAYAWDTKDYWITYAEAKAVQGTTSSAPRDIKQPIISTFAQHVAKESSSNAGKLEITFRASVADQNLQAVMEGHRMEQLPICPGSGFCEAAFSAAAYVLESIGRKEDATVTKMRLQHPVMHRPLTKNLVGPDGELFTTITMESKDSNNIHVSWKASASGPKSSMFEMGTCTLVVQKNVKALQATWDRTAYLVRDRMDSIIKSAEDGQGHWLKHDIFYSLFATTVQYDPLYKCTKMAYISNDFSEAVAEVVLQDNPADAKFMASPYWGEGIVHIAGFVVNANPLRSPGTCFINSGFESFEQTVEFRAGKSYLAYARAHQVEEGRKICQVFVFDSEGKIVAQCYNLSFVRISNALLQHNLSEGASKPVGRGMAKQEKQEVPATTEVVRQPEKEESRHSVDTPSFSDVLINTIVSETGLDPSELTDDTVVAELGVDSIMSIEIANKVSNATGEQLTPMFLHEYPTIGDIKRAFDILTPVSSESDAELTEEYDLLEDTVTEEAVVHVPSPSSTSLEAVVTGSITTKQRDAPQQPRSIGDGPEPAVRFTLLHGRASKRVQDQQASPSPFYLIADGTGSIATYLHLPPHINTKMTIYGVDSPYLHCPSRLTPDVGIPGIAKLIVDELVKRQPQGVPFWLGGFSGGAMIAYEIARQLSALGHVIDSLLLIDMCPPRQIQAQRYDDELGLAMFDAISGNDDSGVWESSDKTHQHLKALFASVSAYNPPPLAKGESPPAKRVALIWAQKGMIDRCANSPRFRQILADRGLVTESYPGFMEDPKLGPVAWSLIHKTESDLGPNGWDKFVGRDELLCMAVEADHLELPTPEFVHLLGEKMDMAFEHFGR.

The interval 12 to 250 (FLVGDQVDSW…NPLNIHALQH (239 aa)) is N-terminal acylcarrier protein transacylase (SAT) domain. In terms of domain architecture, Ketosynthase family 3 (KS3) spans 375-808 (TGRIAIVGMS…GGNACLLLED (434 aa)). Residues cysteine 551, histidine 686, and histidine 726 each act as for beta-ketoacyl synthase activity in the active site. The segment at 912–1195 (IFVFSGQGSH…NQVCTQFVRA (284 aa)) is malonyl-CoA:ACP transacylase (MAT) domain. The active-site For acyl/malonyl transferase activity is the serine 1003. The interval 1293-1433 (QHVAKESSSN…LVVQKNVKAL (141 aa)) is N-terminal hotdog fold. One can recognise a PKS/mFAS DH domain in the interval 1293–1607 (QHVAKESSSN…FVRISNALLQ (315 aa)). The tract at residues 1304–1604 (GKLEITFRAS…NLSFVRISNA (301 aa)) is product template (PT) domain. Residues 1459-1607 (QGHWLKHDIF…FVRISNALLQ (149 aa)) are C-terminal hotdog fold. The tract at residues 1615 to 1650 (SKPVGRGMAKQEKQEVPATTEVVRQPEKEESRHSVD) is disordered. Residues 1638 to 1649 (RQPEKEESRHSV) show a composition bias toward basic and acidic residues. The Carrier domain maps to 1649–1726 (VDTPSFSDVL…DIKRAFDILT (78 aa)). Serine 1686 is modified (O-(pantetheine 4'-phosphoryl)serine). Positions 1820–1964 (ADGTGSIATY…THQHLKALFA (145 aa)) are thioesterase (TE) domain.

It participates in secondary metabolite biosynthesis. In terms of biological role, non-reducing polyketide synthase; part of the gene cluster that mediates the biosynthesis of radicicol, a resorcylic acid lactone (RAL) that irreversibly inhibits the HSP90 molecular chaperone, an important target for cancer chemotherapy. The radicicol cluster encodes only two apparent post-PKS enzymes, a cytochrome P450 monooxygenase (rdc4) and a non-heme halogenase (rdc2) that could introduce the epoxide and the chlorine, respectively. If this cluster includes all the genes required for radicicol biosynthesis, the remaining structural features of radicicol are presumably generated by the PKSs rdc1 and rdc5. The C-2' ketone could arise if the R-PKS rdc5 and NR-PKS rdc1 each carry out four iterations, in contrast to the five iteration-three iteration split for the hypothemycin PKSs. The origin of the cis 5',6' double bond is not known. The radicicol R-PKS rdc5 ER domain may catalyze either double bond isomerization or reduction in the third iteration. This is Non-reducing polyketide synthase rdc1 from Metacordyceps chlamydosporia (Nematophagous fungus).